The following is a 457-amino-acid chain: TnpB-like protein ORF457 (457 aa).

Residues 1–22 (MPPSSGQLLGDEEREPTSTPAI) form a disordered region.

The protein in the N-terminal section; belongs to the transposase 2 family. In the C-terminal section; belongs to the transposase 35 family.

This is TnpB-like protein ORF457 from Acidianus two-tailed virus (ATV).